A 144-amino-acid chain; its full sequence is Transcription antitermination protein NusB (144 aa).

Belongs to the NusB family.

Its function is as follows. Involved in transcription antitermination. Required for transcription of ribosomal RNA (rRNA) genes. Binds specifically to the boxA antiterminator sequence of the ribosomal RNA (rrn) operons. The sequence is that of Transcription antitermination protein NusB from Carboxydothermus hydrogenoformans (strain ATCC BAA-161 / DSM 6008 / Z-2901).